The sequence spans 293 residues: MKVLPPPSIPLLGAHTSTAGGLKNAIYEGRDIGASTVQIFTANQRQWQRRALKEEVIEDFKAALKETDLSYIMSHAGYLINPGAPDPVILEKSRIGIYQEILDCITLGISFVNFHPGAALKSSKEDCMNKIVSSFSQSAPLFDSSPPLVVLLETTAGQGTLIGSNFEELGYLVQNLKNQIPIGVCVDTCHIFAAGYDITSPQGWEDVLNEFDEYVGLSYLRAFHLNDSMFPLGANKDRHAPLGEGYIGKESFKFLMTDERTRKIPKYLETPGGPENWQKEIGELLKFSKNRDS.

His75, His115, Glu153, Asp187, His190, His224, Asp237, His239, and Glu269 together coordinate Zn(2+).

The protein belongs to the AP endonuclease 2 family. The cofactor is Zn(2+).

The catalysed reaction is Endonucleolytic cleavage to 5'-phosphooligonucleotide end-products.. In terms of biological role, endonuclease IV plays a role in DNA repair. It cleaves phosphodiester bonds at apurinic or apyrimidinic (AP) sites, generating a 3'-hydroxyl group and a 5'-terminal sugar phosphate. The protein is Probable endonuclease 4 of Chlamydia pneumoniae (Chlamydophila pneumoniae).